Reading from the N-terminus, the 719-residue chain is Ribosomal RNA large subunit methyltransferase K/L (719 aa).

Residues 43 to 154 (TQYRVLLWTR…REELVISLDL (112 aa)) form the THUMP domain.

It belongs to the methyltransferase superfamily. RlmKL family.

It is found in the cytoplasm. The catalysed reaction is guanosine(2445) in 23S rRNA + S-adenosyl-L-methionine = N(2)-methylguanosine(2445) in 23S rRNA + S-adenosyl-L-homocysteine + H(+). The enzyme catalyses guanosine(2069) in 23S rRNA + S-adenosyl-L-methionine = N(2)-methylguanosine(2069) in 23S rRNA + S-adenosyl-L-homocysteine + H(+). Functionally, specifically methylates the guanine in position 2445 (m2G2445) and the guanine in position 2069 (m7G2069) of 23S rRNA. This is Ribosomal RNA large subunit methyltransferase K/L from Pasteurella multocida (strain Pm70).